Here is a 408-residue protein sequence, read N- to C-terminus: MRVREELVSRFFRYAAIESQSNGRSQSLPSSPGQAALAALLADEMRAIGLEDVCIDAHAIVTGVKRGNRPAAPPIGFIAHLDTVDVGLSPFVRPQVLRFEGEDLCINRQEDIWLRVAEHPEILDWLGEDIIVGDGTSVLGADNKAAIAVIMTLLGRLDHEVGHGDVFVAFVPDEEIGMRGAKAMDVSRFPCDFAYTIDCCELGEVVLETFNAASCEIVFTGVSAHPMSAKGMLVNPLLMAMDFISHFDRKETPECTEGRDGFYWFKDLIANDSVASLTALIRDFDTDGFNRRKHRIAAVAEQMRSRYPTGNVRYQITDTYRNVSTSLARDERAVALLFKAMEELGIGKKVIAMRGGTDGAVLSAKGIPTPNFFTGAYNFHSRYEFLPVPAFERSLEVALKVCQLAATE.

His80 serves as a coordination point for Zn(2+). Residue Asp82 is part of the active site. Asp142 is a binding site for Zn(2+). The active-site Proton acceptor is Glu174. Glu175, Asp198, and His380 together coordinate Zn(2+).

The protein belongs to the peptidase M20B family. The cofactor is Zn(2+).

The sequence is that of Peptidase T-like protein RB0614 from Rhizobium meliloti (strain 1021) (Ensifer meliloti).